Here is a 330-residue protein sequence, read N- to C-terminus: uncharacterized protein (330 aa).

The active site involves histidine 257.

It belongs to the IUNH family.

This is an uncharacterized protein from Schizosaccharomyces pombe (strain 972 / ATCC 24843) (Fission yeast).